We begin with the raw amino-acid sequence, 79 residues long: CDC42 small effector protein 1 (79 aa).

Residues Cys10 and Cys11 are each lipidated (S-palmitoyl cysteine). In terms of domain architecture, CRIB spans 30–43 (IGEPMNFVHLTHIG). The interval 48-79 (GAGDGLAMTGAVQEQMRSKGNRDRPWSNSRAL) is disordered. The segment covering 63 to 72 (MRSKGNRDRP) has biased composition (basic and acidic residues).

The protein belongs to the CDC42SE/SPEC family. As to quaternary structure, interacts with CDC42 (in GTP-bound form). Interacts weakly with RAC1 and not at all with RHOA.

It localises to the cytoplasm. It is found in the cytoskeleton. The protein resides in the cell membrane. In terms of biological role, probably involved in the organization of the actin cytoskeleton by acting downstream of CDC42, inducing actin filament assembly. Alters CDC42-induced cell shape changes. In activated T-cells, may play a role in CDC42-mediated F-actin accumulation at the immunological synapse. May play a role in early contractile events in phagocytosis in macrophages. This Rattus norvegicus (Rat) protein is CDC42 small effector protein 1 (Cdc42se1).